The primary structure comprises 640 residues: WW domain-binding protein 11 (640 aa).

Over residues 1 to 11 (MGRRSTSSTKS) the composition is skewed to polar residues. Residues 1–37 (MGRRSTSSTKSGKFMNPTDQARKEARKRELKKNKKQR) form a disordered region. Residues 28–37 (RELKKNKKQR) show a composition bias toward basic residues. Residues 75 to 122 (EKVLRDKRKKLRETFERIVRLYERENPETYKELRKLELEYETKRGQLS) adopt a coiled-coil conformation. 3 disordered regions span residues 155–174 (DIPLPGAQPPSILKKSSALG), 187–563 (VPRL…ISAK), and 582–625 (RVRR…LKTK). The span at 194–207 (RKPPGPPPGPPPPQ) shows a compositional bias: pro residues. Residues 230 to 240 (DGGRDSDSKSE) are compositionally biased toward basic and acidic residues. Positions 241–251 (ADEESDSQEDS) are enriched in acidic residues. Residues 252 to 274 (SAEREDSDRGERDEERERADKHT) show a composition bias toward basic and acidic residues. At serine 285 the chain carries Phosphoserine. Over residues 315–338 (PEEEEEDEEEEYSESEDSEAEDQA) the composition is skewed to acidic residues. The span at 356 to 371 (APMAAQQPPSLMQAPP) shows a compositional bias: low complexity. Composition is skewed to pro residues over residues 372 to 412 (ITGP…PPGL) and 422 to 491 (RLLP…PPLN). The PGR signature appears at 421–432 (PRLLPPGPPPGR). Positions 547 to 558 (GSGGASAQGGGA) are enriched in gly residues. A compositionally biased stretch (basic and acidic residues) spans 586–599 (DRAGGTGRREEERP). Residues 603 to 616 (QQTPAHQAPPIAHA) are compositionally biased toward low complexity.

The protein localises to the cytoplasm. It is found in the nucleus. In terms of biological role, activates pre-mRNA splicing. This is WW domain-binding protein 11 (wbp11) from Danio rerio (Zebrafish).